Here is a 257-residue protein sequence, read N- to C-terminus: tRNA pseudouridine synthase A (257 aa).

The active-site Nucleophile is the Asp53. Tyr111 contacts substrate.

Belongs to the tRNA pseudouridine synthase TruA family. Homodimer.

It carries out the reaction uridine(38/39/40) in tRNA = pseudouridine(38/39/40) in tRNA. Functionally, formation of pseudouridine at positions 38, 39 and 40 in the anticodon stem and loop of transfer RNAs. The sequence is that of tRNA pseudouridine synthase A from Xylella fastidiosa (strain M12).